The chain runs to 126 residues: Holo-[acyl-carrier-protein] synthase (126 aa).

Positions 9 and 58 each coordinate Mg(2+).

The protein belongs to the P-Pant transferase superfamily. AcpS family. It depends on Mg(2+) as a cofactor.

It localises to the cytoplasm. The catalysed reaction is apo-[ACP] + CoA = holo-[ACP] + adenosine 3',5'-bisphosphate + H(+). Functionally, transfers the 4'-phosphopantetheine moiety from coenzyme A to a Ser of acyl-carrier-protein. This chain is Holo-[acyl-carrier-protein] synthase, found in Salmonella paratyphi B (strain ATCC BAA-1250 / SPB7).